Reading from the N-terminus, the 64-residue chain is Large ribosomal subunit protein uL29 (64 aa).

It belongs to the universal ribosomal protein uL29 family.

In Chloroherpeton thalassium (strain ATCC 35110 / GB-78), this protein is Large ribosomal subunit protein uL29.